Reading from the N-terminus, the 38-residue chain is Cytochrome b6-f complex subunit 5 (38 aa).

A helical membrane pass occupies residues 5–25 (LLSGIVLGLIPITLAGLFVTA).

This sequence belongs to the PetG family. As to quaternary structure, the 4 large subunits of the cytochrome b6-f complex are cytochrome b6, subunit IV (17 kDa polypeptide, PetD), cytochrome f and the Rieske protein, while the 4 small subunits are PetG, PetL, PetM and PetN. The complex functions as a dimer.

It is found in the plastid. The protein resides in the chloroplast thylakoid membrane. Its function is as follows. Component of the cytochrome b6-f complex, which mediates electron transfer between photosystem II (PSII) and photosystem I (PSI), cyclic electron flow around PSI, and state transitions. PetG is required for either the stability or assembly of the cytochrome b6-f complex. In Adiantum capillus-veneris (Maidenhair fern), this protein is Cytochrome b6-f complex subunit 5.